The chain runs to 89 residues: Small ribosomal subunit protein uS15 (89 aa).

It belongs to the universal ribosomal protein uS15 family. Part of the 30S ribosomal subunit. Forms a bridge to the 50S subunit in the 70S ribosome, contacting the 23S rRNA.

Functionally, one of the primary rRNA binding proteins, it binds directly to 16S rRNA where it helps nucleate assembly of the platform of the 30S subunit by binding and bridging several RNA helices of the 16S rRNA. Forms an intersubunit bridge (bridge B4) with the 23S rRNA of the 50S subunit in the ribosome. This Pseudomonas fluorescens (strain Pf0-1) protein is Small ribosomal subunit protein uS15.